Reading from the N-terminus, the 930-residue chain is Translation initiation factor IF-2 (930 aa).

The segment covering 50 to 67 (FKPAAAPKVEAKPAAPKV) has biased composition (low complexity). Disordered stretches follow at residues 50 to 195 (FKPA…PRID) and 260 to 346 (EVVP…HELP). Basic and acidic residues-rich tracts occupy residues 68-90 (SAEKKTEKSEPAKPAVAKEEAKP) and 110-125 (FKAEREARAKEQAERR). A compositionally biased stretch (low complexity) spans 129–141 (KGNNRDQQQNGNR). Basic and acidic residues-rich tracts occupy residues 157–167 (RDNRRFNDQAK) and 262–295 (VPEKKEPAVDTRRKKQARPDKNRDDYDHEEDGPR). The span at 309–318 (NQKNSNWNNN) shows a compositional bias: low complexity. The span at 337-346 (VTERKFHELP) shows a compositional bias: basic and acidic residues. The tr-type G domain maps to 432 to 599 (ERPPVVTIMG…TVLLVAEIQE (168 aa)). Residues 441–448 (GHVDHGKT) form a G1 region. A GTP-binding site is contributed by 441–448 (GHVDHGKT). Residues 466-470 (GITQH) form a G2 region. Residues 487 to 490 (DTPG) form a G3 region. Residues 487–491 (DTPGH) and 541–544 (NKID) contribute to the GTP site. The interval 541–544 (NKID) is G4. Residues 577–579 (SAK) are G5.

Belongs to the TRAFAC class translation factor GTPase superfamily. Classic translation factor GTPase family. IF-2 subfamily.

It is found in the cytoplasm. Its function is as follows. One of the essential components for the initiation of protein synthesis. Protects formylmethionyl-tRNA from spontaneous hydrolysis and promotes its binding to the 30S ribosomal subunits. Also involved in the hydrolysis of GTP during the formation of the 70S ribosomal complex. In Streptococcus pneumoniae (strain Hungary19A-6), this protein is Translation initiation factor IF-2.